A 292-amino-acid chain; its full sequence is Glutamate racemase (292 aa).

Residues 28-29 (DS) and 60-61 (YG) contribute to the substrate site. Cysteine 91 functions as the Proton donor/acceptor in the catalytic mechanism. 92–93 (NT) contacts substrate. Cysteine 200 functions as the Proton donor/acceptor in the catalytic mechanism. 201–202 (TH) serves as a coordination point for substrate.

Belongs to the aspartate/glutamate racemases family.

It catalyses the reaction L-glutamate = D-glutamate. The protein operates within cell wall biogenesis; peptidoglycan biosynthesis. Its function is as follows. Provides the (R)-glutamate required for cell wall biosynthesis. The chain is Glutamate racemase from Nostoc sp. (strain PCC 7120 / SAG 25.82 / UTEX 2576).